We begin with the raw amino-acid sequence, 283 residues long: Pantothenate synthetase (283 aa).

Position 30-37 (30-37) interacts with ATP; sequence MGNLHDGH. Catalysis depends on His-37, which acts as the Proton donor. Gln-61 is a (R)-pantoate binding site. Gln-61 is a binding site for beta-alanine. 149–152 contacts ATP; it reads GEKD. Gln-155 serves as a coordination point for (R)-pantoate. ATP is bound at residue 186-189; the sequence is LSSR.

This sequence belongs to the pantothenate synthetase family. Homodimer.

It localises to the cytoplasm. The catalysed reaction is (R)-pantoate + beta-alanine + ATP = (R)-pantothenate + AMP + diphosphate + H(+). Its pathway is cofactor biosynthesis; (R)-pantothenate biosynthesis; (R)-pantothenate from (R)-pantoate and beta-alanine: step 1/1. Its function is as follows. Catalyzes the condensation of pantoate with beta-alanine in an ATP-dependent reaction via a pantoyl-adenylate intermediate. This Escherichia coli (strain ATCC 8739 / DSM 1576 / NBRC 3972 / NCIMB 8545 / WDCM 00012 / Crooks) protein is Pantothenate synthetase.